Consider the following 258-residue polypeptide: Arylamine N-acetyltransferase 1 (258 aa).

Catalysis depends on cysteine 59, which acts as the Acyl-thioester intermediate. 97–98 (IH) is a substrate binding site. Residues histidine 98 and aspartate 113 contribute to the active site. 2 residues coordinate CoA: tyrosine 199 and threonine 205.

The protein belongs to the arylamine N-acetyltransferase family.

The protein localises to the cytoplasm. It carries out the reaction an arylamine + acetyl-CoA = an N-acetylarylamine + CoA. In terms of biological role, participates in the detoxification of a plethora of hydrazine and arylamine drugs. The polypeptide is Arylamine N-acetyltransferase 1 (NAT1) (Felis catus (Cat)).